The primary structure comprises 104 residues: L-rhamnose mutarotase (104 aa).

Position 18 (Y18) interacts with substrate. Catalysis depends on H22, which acts as the Proton donor. Residues Y41 and 76–77 (WW) contribute to the substrate site.

It belongs to the rhamnose mutarotase family. As to quaternary structure, homodimer.

It localises to the cytoplasm. It carries out the reaction alpha-L-rhamnose = beta-L-rhamnose. Its pathway is carbohydrate metabolism; L-rhamnose metabolism. Involved in the anomeric conversion of L-rhamnose. The sequence is that of L-rhamnose mutarotase from Escherichia coli O127:H6 (strain E2348/69 / EPEC).